A 127-amino-acid polypeptide reads, in one-letter code: Fluoride-specific ion channel FluC (127 aa).

A run of 4 helical transmembrane segments spans residues 4–24 (IMLA…WLGL), 35–55 (VGTL…LAWF), 71–91 (TGLC…VFLL), and 101–121 (LNVA…FWLF). Na(+) is bound by residues G75 and T78.

Belongs to the fluoride channel Fluc/FEX (TC 1.A.43) family.

The protein resides in the cell inner membrane. It carries out the reaction fluoride(in) = fluoride(out). Its activity is regulated as follows. Na(+) is not transported, but it plays an essential structural role and its presence is essential for fluoride channel function. Functionally, fluoride-specific ion channel. Important for reducing fluoride concentration in the cell, thus reducing its toxicity. In Cronobacter sakazakii (strain ATCC BAA-894) (Enterobacter sakazakii), this protein is Fluoride-specific ion channel FluC.